Here is a 1025-residue protein sequence, read N- to C-terminus: Collagen alpha-1(VI) chain (1025 aa).

Residues 1–19 form the signal peptide; it reads MRLAHALLPLLLQACWVAT. The tract at residues 20–255 is N-terminal globular domain; it reads QDIQGSKAIA…CCSFECQAAR (236 aa). Positions 36–234 constitute a VWFA 1 domain; that stretch reads DLFFVLDTSE…EVISQTIDTI (199 aa). The N-linked (GlcNAc...) asparagine glycan is linked to Asn211. The interval 252–588 is disordered; sequence QAARGPPGPR…QGPPGHVGPP (337 aa). Residues 256–591 are triple-helical region; sequence GPPGPRGDPG…PGHVGPPGPD (336 aa). The short motif at 261–263 is the Cell attachment site element; that stretch reads RGD. Basic and acidic residues-rich tracts occupy residues 267–284 and 300–333; these read EGER…EAGD and KGEK…DGMK. 2 short sequence motifs (cell attachment site) span residues 441 to 443 and 477 to 479; these read RGD. Asn515 and Asn536 each carry an N-linked (GlcNAc...) asparagine glycan. Acidic residues predominate over residues 549-559; the sequence is GEVGDPGEDNN. Positions 578-588 are enriched in pro residues; sequence PQGPPGHVGPP. The tract at residues 592-1025 is C-terminal globular domain; that stretch reads ECEILDIIMK…QTVSRKVALG (434 aa). 2 VWFA domains span residues 614-802 and 826-1018; these read DILF…LKNI and DITI…YQTV. N-linked (GlcNAc...) asparagine glycosylation is found at Asn801 and Asn893.

This sequence belongs to the type VI collagen family. In terms of assembly, trimers composed of three different chains: alpha-1(VI), alpha-2(VI), and alpha-3(VI) or alpha-4(VI) or alpha-5(VI) or alpha-6(VI). Post-translationally, prolines at the third position of the tripeptide repeating unit (G-X-Y) are hydroxylated in some or all of the chains.

The protein localises to the secreted. The protein resides in the extracellular space. It is found in the extracellular matrix. Functionally, collagen VI acts as a cell-binding protein. This is Collagen alpha-1(VI) chain (Col6a1) from Mus musculus (Mouse).